The following is a 330-amino-acid chain: Aspartate--ammonia ligase (330 aa).

Belongs to the class-II aminoacyl-tRNA synthetase family. AsnA subfamily.

The protein resides in the cytoplasm. It catalyses the reaction L-aspartate + NH4(+) + ATP = L-asparagine + AMP + diphosphate + H(+). It functions in the pathway amino-acid biosynthesis; L-asparagine biosynthesis; L-asparagine from L-aspartate (ammonia route): step 1/1. This is Aspartate--ammonia ligase from Actinobacillus succinogenes (strain ATCC 55618 / DSM 22257 / CCUG 43843 / 130Z).